The following is a 295-amino-acid chain: UDP-N-acetylenolpyruvoylglucosamine reductase (295 aa).

An FAD-binding PCMH-type domain is found at 23–188 (KVGGPADFLA…ISAKFALKPG (166 aa)). The active site involves R167. S217 (proton donor) is an active-site residue. The active site involves E287.

The protein belongs to the MurB family. Requires FAD as cofactor.

It localises to the cytoplasm. The enzyme catalyses UDP-N-acetyl-alpha-D-muramate + NADP(+) = UDP-N-acetyl-3-O-(1-carboxyvinyl)-alpha-D-glucosamine + NADPH + H(+). The protein operates within cell wall biogenesis; peptidoglycan biosynthesis. Functionally, cell wall formation. The protein is UDP-N-acetylenolpyruvoylglucosamine reductase of Streptococcus pyogenes serotype M6 (strain ATCC BAA-946 / MGAS10394).